Reading from the N-terminus, the 170-residue chain is MKIKILFFLALPFLAYASEHGGTNYDIVERTLNFLLFFAILVYFAAKPLKALYQSRIDRIANKLESIQEKLRESKAKKDDVLKRVEEAKQNANALIETAKKEAVNLAAKVKKEAQNDIANIEKGYKEQKEFEERKMTKGVVNEILSDIFSSDSLKVDQKELVNIILKKVS.

The helical transmembrane segment at 3-23 (IKILFFLALPFLAYASEHGGT) threads the bilayer.

It belongs to the ATPase B chain family. F-type ATPases have 2 components, F(1) - the catalytic core - and F(0) - the membrane proton channel. F(1) has five subunits: alpha(3), beta(3), gamma(1), delta(1), epsilon(1). F(0) has three main subunits: a(1), b(2) and c(10-14). The alpha and beta chains form an alternating ring which encloses part of the gamma chain. F(1) is attached to F(0) by a central stalk formed by the gamma and epsilon chains, while a peripheral stalk is formed by the delta and b chains.

The protein localises to the cell inner membrane. In terms of biological role, f(1)F(0) ATP synthase produces ATP from ADP in the presence of a proton or sodium gradient. F-type ATPases consist of two structural domains, F(1) containing the extramembraneous catalytic core and F(0) containing the membrane proton channel, linked together by a central stalk and a peripheral stalk. During catalysis, ATP synthesis in the catalytic domain of F(1) is coupled via a rotary mechanism of the central stalk subunits to proton translocation. Functionally, component of the F(0) channel, it forms part of the peripheral stalk, linking F(1) to F(0). In Campylobacter concisus (strain 13826), this protein is ATP synthase subunit b.